The chain runs to 724 residues: Ribosomal protein S6 kinase alpha-1 (724 aa).

Ser-54 carries the post-translational modification Phosphoserine. The Protein kinase 1 domain occupies 62–310 (FELLKVLGQG…AEEIKRHIFY (249 aa)). ATP-binding positions include 68-76 (LGQGSFGKV) and Lys-94. Asp-187 functions as the Proton acceptor in the catalytic mechanism. Residue Ser-221 is modified to Phosphoserine; by PDPK1. Ser-296 is subject to Phosphoserine. The region spanning 311-380 (STIDWNKLYR…VATGLMEDDG (70 aa)) is the AGC-kinase C-terminal domain. At Thr-348 the chain carries Phosphothreonine. Ser-352, Ser-358, and Ser-369 each carry phosphoserine. The Protein kinase 2 domain maps to 407–664 (YVVKETIGVG…AKQVLQHPWI (258 aa)). ATP contacts are provided by residues 413–421 (IGVGSYSVC) and Lys-436. The active-site Proton acceptor is the Asp-524. At Thr-562 the chain carries Phosphothreonine. At Ser-721 the chain carries Phosphoserine.

Belongs to the protein kinase superfamily. AGC Ser/Thr protein kinase family. S6 kinase subfamily. As to quaternary structure, forms a complex with either MAPK1/ERK2 or MAPK3/ERK1 in quiescent cells. Transiently dissociates following mitogenic stimulation. Interacts with ETV1/ER81 and FGFR1. It depends on Mg(2+) as a cofactor. Activated by phosphorylation at Ser-221 by PDPK1. Autophosphorylated on Ser-369, as part of the activation process. May be phosphorylated at Thr-348 and Ser-352 by MAPK1/ERK2 and MAPK3/ERK1. In terms of processing, N-terminal myristoylation results in an activated kinase in the absence of added growth factors. As to expression, intestine, thymus, and lung.

It localises to the nucleus. It is found in the cytoplasm. It catalyses the reaction L-seryl-[protein] + ATP = O-phospho-L-seryl-[protein] + ADP + H(+). It carries out the reaction L-threonyl-[protein] + ATP = O-phospho-L-threonyl-[protein] + ADP + H(+). With respect to regulation, upon extracellular signal or mitogen stimulation, phosphorylated at Thr-562 in the C-terminal kinase domain (CTKD) by MAPK1/ERK2 and MAPK3/ERK1. The activated CTKD then autophosphorylates Ser-369, allowing binding of PDPK1, which in turn phosphorylates Ser-221 in the N-terminal kinase domain (NTDK) leading to the full activation of the protein and subsequent phosphorylation of the substrates by the NTKD. Its function is as follows. Serine/threonine-protein kinase that acts downstream of ERK (MAPK1/ERK2 and MAPK3/ERK1) signaling and mediates mitogenic and stress-induced activation of the transcription factors CREB1, ETV1/ER81 and NR4A1/NUR77, regulates translation through RPS6 and EIF4B phosphorylation, and mediates cellular proliferation, survival, and differentiation by modulating mTOR signaling and repressing pro-apoptotic function of BAD and DAPK1. In fibroblast, is required for EGF-stimulated phosphorylation of CREB1, which results in the subsequent transcriptional activation of several immediate-early genes. In response to mitogenic stimulation (EGF and PMA), phosphorylates and activates NR4A1/NUR77 and ETV1/ER81 transcription factors and the cofactor CREBBP. Upon insulin-derived signal, acts indirectly on the transcription regulation of several genes by phosphorylating GSK3B at 'Ser-9' and inhibiting its activity. Phosphorylates RPS6 in response to serum or EGF via an mTOR-independent mechanism and promotes translation initiation by facilitating assembly of the pre-initiation complex. In response to insulin, phosphorylates EIF4B, enhancing EIF4B affinity for the EIF3 complex and stimulating cap-dependent translation. Is involved in the mTOR nutrient-sensing pathway by directly phosphorylating TSC2 at 'Ser-1798', which potently inhibits TSC2 ability to suppress mTOR signaling, and mediates phosphorylation of RPTOR, which regulates mTORC1 activity and may promote rapamycin-sensitive signaling independently of the PI3K/AKT pathway. Also involved in feedback regulation of mTORC1 and mTORC2 by phosphorylating DEPTOR. Mediates cell survival by phosphorylating the pro-apoptotic proteins BAD and DAPK1 and suppressing their pro-apoptotic function. Promotes the survival of hepatic stellate cells by phosphorylating CEBPB in response to the hepatotoxin carbon tetrachloride (CCl4). Mediates induction of hepatocyte prolifration by TGFA through phosphorylation of CEBPB. Is involved in cell cycle regulation by phosphorylating the CDK inhibitor CDKN1B, which promotes CDKN1B association with 14-3-3 proteins and prevents its translocation to the nucleus and inhibition of G1 progression. Phosphorylates EPHA2 at 'Ser-897', the RPS6KA-EPHA2 signaling pathway controls cell migration. In response to mTORC1 activation, phosphorylates EIF4B at 'Ser-406' and 'Ser-422' which stimulates bicarbonate cotransporter SLC4A7 mRNA translation, increasing SLC4A7 protein abundance and function. This is Ribosomal protein S6 kinase alpha-1 (Rps6ka1) from Mus musculus (Mouse).